Reading from the N-terminus, the 366-residue chain is Glucose 1-dehydrogenase 2 (366 aa).

Residue C39 participates in Zn(2+) binding. S41 contacts substrate. Positions 66 and 67 each coordinate Zn(2+). Residues N90, E116, Q152, and D156 each contribute to the substrate site. A Zn(2+)-binding site is contributed by Q152. NADP(+) is bound by residues 212–214 (NRR), 277–279 (FGF), 305–307 (LIN), and K354. N307 lines the substrate pocket.

Belongs to the zinc-containing alcohol dehydrogenase family. Glucose 1-dehydrogenase subfamily. Zn(2+) is required as a cofactor.

It catalyses the reaction D-glucose + NAD(+) = D-glucono-1,5-lactone + NADH + H(+). The catalysed reaction is D-glucose + NADP(+) = D-glucono-1,5-lactone + NADPH + H(+). Its function is as follows. Catalyzes the NAD(P)(+)-dependent oxidation of D-glucose to D-gluconate via gluconolactone. Can utilize both NAD(+) and NADP(+) as electron acceptor. Is involved in the degradation of glucose through a non-phosphorylative variant of the Entner-Doudoroff pathway. In Caldivirga maquilingensis (strain ATCC 700844 / DSM 13496 / JCM 10307 / IC-167), this protein is Glucose 1-dehydrogenase 2.